Reading from the N-terminus, the 387-residue chain is Chlorophyll synthase, chloroplastic (387 aa).

The N-terminal 57 residues, 1–57 (MTSILNTVSTIHSSRVTSVDRVGVLSLRNSDSVEFTRRRSGFSTLIYESPGRRFVVR), are a transit peptide targeting the chloroplast. The tract at residues 62 to 81 (DTDKVKSQTPDKAPAGGSSI) is disordered. The next 7 membrane-spanning stretches (helical) occupy residues 182–202 (VITQ…ILDV), 210–230 (TVFY…APPL), 241–261 (FALG…LFGT), 266–286 (VVVL…VNDF), 311–331 (WICV…LLAS), 336–356 (YALA…KYFL), and 364–384 (VKYQ…TALA).

The protein belongs to the UbiA prenyltransferase family. Chlorophyll synthase subfamily. Low level in flower buds, flowers, stems, leaves, greening cotyledons and immature siliques, but not in mature siliques or seeds.

It is found in the plastid. It localises to the chloroplast membrane. The catalysed reaction is phytyl diphosphate + chlorophyllide a + H(+) = chlorophyll a + diphosphate. It functions in the pathway porphyrin-containing compound metabolism; chlorophyll biosynthesis. Functionally, involved in one of the last steps of the biosynthesis of chlorophyll a. Catalyzes the esterification of chlorophillide a or b with a preference for geranylgeranyldiphosphate (GGPP) rather than for phytyldiphosphate (PhyPP). The sequence is that of Chlorophyll synthase, chloroplastic (CHLG) from Arabidopsis thaliana (Mouse-ear cress).